A 201-amino-acid chain; its full sequence is Large ribosomal subunit protein uL4 (201 aa).

Positions 39-67 (ARQGSRAQKTRSEVAGGGRKPWKQKGSGR) are disordered.

This sequence belongs to the universal ribosomal protein uL4 family. In terms of assembly, part of the 50S ribosomal subunit.

In terms of biological role, one of the primary rRNA binding proteins, this protein initially binds near the 5'-end of the 23S rRNA. It is important during the early stages of 50S assembly. It makes multiple contacts with different domains of the 23S rRNA in the assembled 50S subunit and ribosome. Forms part of the polypeptide exit tunnel. This Marinomonas sp. (strain MWYL1) protein is Large ribosomal subunit protein uL4.